Here is a 96-residue protein sequence, read N- to C-terminus: ATP-dependent Clp protease adapter protein ClpS (96 aa).

The protein belongs to the ClpS family. As to quaternary structure, binds to the N-terminal domain of the chaperone ClpA.

Its function is as follows. Involved in the modulation of the specificity of the ClpAP-mediated ATP-dependent protein degradation. The chain is ATP-dependent Clp protease adapter protein ClpS from Streptomyces coelicolor (strain ATCC BAA-471 / A3(2) / M145).